The primary structure comprises 96 residues: Co-chaperonin GroES 1 (96 aa).

This sequence belongs to the GroES chaperonin family. In terms of assembly, heptamer of 7 subunits arranged in a ring. Interacts with the chaperonin GroEL.

It localises to the cytoplasm. Functionally, together with the chaperonin GroEL, plays an essential role in assisting protein folding. The GroEL-GroES system forms a nano-cage that allows encapsulation of the non-native substrate proteins and provides a physical environment optimized to promote and accelerate protein folding. GroES binds to the apical surface of the GroEL ring, thereby capping the opening of the GroEL channel. The chain is Co-chaperonin GroES 1 from Vibrio cholerae serotype O1 (strain ATCC 39315 / El Tor Inaba N16961).